A 345-amino-acid chain; its full sequence is Phosphoribosylformylglycinamidine cyclo-ligase (345 aa).

The protein belongs to the AIR synthase family.

The protein resides in the cytoplasm. The enzyme catalyses 2-formamido-N(1)-(5-O-phospho-beta-D-ribosyl)acetamidine + ATP = 5-amino-1-(5-phospho-beta-D-ribosyl)imidazole + ADP + phosphate + H(+). It functions in the pathway purine metabolism; IMP biosynthesis via de novo pathway; 5-amino-1-(5-phospho-D-ribosyl)imidazole from N(2)-formyl-N(1)-(5-phospho-D-ribosyl)glycinamide: step 2/2. The chain is Phosphoribosylformylglycinamidine cyclo-ligase from Shouchella clausii (strain KSM-K16) (Alkalihalobacillus clausii).